Here is a 558-residue protein sequence, read N- to C-terminus: Potassium-transporting ATPase potassium-binding subunit 1 (558 aa).

A run of 12 helical transmembrane segments spans residues 1-21 (MEIILFLTMMVMIAYVFSGYL), 66-86 (FNGFMGVITFVLLIVQQWLFL), 127-147 (MIVMTYLMFTSSASGYAVCIA), 166-186 (IVRFIVRVLLPLSCLISILLM), 245-265 (IWSNFIEMGSMMLLPMSMLFL), 281-301 (ALILFVAMFFIFIAILTLTMW), 327-347 (FGAGLSALFTVITTAFTTGSV), 354-374 (LTPLGGLGPMVLMMLNVVFGG), 377-397 (VGLMNLLIYVLLTLFICSLMV), 416-436 (IVLVFLIHPILILVFSALAFM), 482-502 (ISTGIIMLLSRYIPIILQLMI), and 531-551 (IVFIVLLSGLTFIPVLLLGPI).

It belongs to the KdpA family. The system is composed of three essential subunits: KdpA, KdpB and KdpC.

Its subcellular location is the cell membrane. In terms of biological role, part of the high-affinity ATP-driven potassium transport (or Kdp) system, which catalyzes the hydrolysis of ATP coupled with the electrogenic transport of potassium into the cytoplasm. This subunit binds the extracellular potassium ions and delivers the ions to the membrane domain of KdpB through an intramembrane tunnel. This Staphylococcus aureus (strain MRSA252) protein is Potassium-transporting ATPase potassium-binding subunit 1.